The chain runs to 322 residues: Quinolinate synthase (322 aa).

Iminosuccinate contacts are provided by His37 and Ser54. Cys99 lines the [4Fe-4S] cluster pocket. Residues 125–127 and Ser142 each bind iminosuccinate; that span reads YIN. Cys185 is a binding site for [4Fe-4S] cluster. Residues 211–213 and Thr228 each bind iminosuccinate; that span reads HPE. Position 278 (Cys278) interacts with [4Fe-4S] cluster.

The protein belongs to the quinolinate synthase family. Type 2 subfamily. [4Fe-4S] cluster is required as a cofactor.

It localises to the cytoplasm. The catalysed reaction is iminosuccinate + dihydroxyacetone phosphate = quinolinate + phosphate + 2 H2O + H(+). It functions in the pathway cofactor biosynthesis; NAD(+) biosynthesis; quinolinate from iminoaspartate: step 1/1. In terms of biological role, catalyzes the condensation of iminoaspartate with dihydroxyacetone phosphate to form quinolinate. In Chlorobaculum parvum (strain DSM 263 / NCIMB 8327) (Chlorobium vibrioforme subsp. thiosulfatophilum), this protein is Quinolinate synthase.